Consider the following 459-residue polypeptide: Vasoactive intestinal polypeptide receptor 1 (459 aa).

Positions 1 to 30 (MRPPSLPPARWLCVLAGALACALGPAGSRA) are cleaved as a signal peptide. The Extracellular segment spans residues 31 to 142 (ASPHQECEYL…EQQQTEFYDA (112 aa)). 5 cysteine pairs are disulfide-bonded: cysteine 37–cysteine 209, cysteine 50–cysteine 72, cysteine 63–cysteine 105, cysteine 86–cysteine 122, and cysteine 216–cysteine 286. Asparagine 58, asparagine 69, asparagine 100, and asparagine 104 each carry an N-linked (GlcNAc...) asparagine glycan. A helical transmembrane segment spans residues 143–167 (VKTGYTIGYSLSLASLLVAMAILSL). The Cytoplasmic segment spans residues 168–175 (FRKLHCTR). A helical transmembrane segment spans residues 176-197 (NYIHMHLFMSFILRATAVFIKD). Over 198–217 (MALFNNGETDHCSEASVSCK) the chain is Extracellular. Residues 218–242 (AAVVFFQYCVMANFFWLLVEGLYLH) traverse the membrane as a helical segment. Topologically, residues 243–255 (TLLAVSFFSERKY) are cytoplasmic. The helical transmembrane segment at 256-277 (FWGYILIGWGVPSVFIMIWTIV) threads the bilayer. Over 278-293 (RIHFEDFGCWDTIINS) the chain is Extracellular. Asparagine 292 carries an N-linked (GlcNAc...) asparagine glycan. A helical transmembrane segment spans residues 294-318 (SLWWIIKGPILISILVNFILFICII). Residues 319–340 (RILVQKLRPPDIGKNDSSPYSR) lie on the Cytoplasmic side of the membrane. The helical transmembrane segment at 341–361 (LAKSTLLLIPLFGVHYVMFAF) threads the bilayer. Over 362–369 (FPDNFKAQ) the chain is Extracellular. Residues 370–393 (VKMVFELVVGSFQGFVVAILYCFL) form a helical membrane-spanning segment. At 394–459 (NGEVQAELRR…SSFQAEVSLV (66 aa)) the chain is on the cytoplasmic side.

It belongs to the G-protein coupled receptor 2 family. Interacts with ADCYAP1/PACAP; activated by both PACAP27 and PACAP38 neuropeptides. Interacts with VIP; the interaction results in VIPR1 activation.

It localises to the cell membrane. Functionally, g protein-coupled receptor activated by the neuropeptides vasoactive intestinal peptide (VIP) and pituitary adenylate cyclase-activating polypeptide (ADCYAP1/PACAP). Binds VIP and both PACAP27 and PACAP38 bioactive peptides with the following order of ligand affinity VIP = PACAP27 &gt; PACAP38. Ligand binding causes a conformation change that triggers signaling via guanine nucleotide-binding proteins (G proteins) and modulates the activity of downstream effectors. Activates cAMP-dependent pathway. The chain is Vasoactive intestinal polypeptide receptor 1 from Mus musculus (Mouse).